An 83-amino-acid polypeptide reads, in one-letter code: NAD(P)H-quinone oxidoreductase subunit L (83 aa).

A run of 2 helical transmembrane segments spans residues 17–37 and 53–73; these read VLLA…LALL and TAIY…APFI.

Belongs to the complex I NdhL subunit family. NDH-1 can be composed of about 15 different subunits; different subcomplexes with different compositions have been identified which probably have different functions.

It is found in the cellular thylakoid membrane. It carries out the reaction a plastoquinone + NADH + (n+1) H(+)(in) = a plastoquinol + NAD(+) + n H(+)(out). The enzyme catalyses a plastoquinone + NADPH + (n+1) H(+)(in) = a plastoquinol + NADP(+) + n H(+)(out). Functionally, NDH-1 shuttles electrons from an unknown electron donor, via FMN and iron-sulfur (Fe-S) centers, to quinones in the respiratory and/or the photosynthetic chain. The immediate electron acceptor for the enzyme in this species is believed to be plastoquinone. Couples the redox reaction to proton translocation, and thus conserves the redox energy in a proton gradient. Cyanobacterial NDH-1 also plays a role in inorganic carbon-concentration. The polypeptide is NAD(P)H-quinone oxidoreductase subunit L (Synechococcus sp. (strain RCC307)).